A 171-amino-acid chain; its full sequence is MAQQKEHQQESEFLERLVAVNRVTKVVKGGRQFAFAALVVIGDGKGKVGYGYGKAKEVPVAIQKAMDQAKKNLVTIALNKDTLQHAITGHHGAARVFMQPASEGTGIIAGGAMRAVFDVVGVKDVLAKCQGTRNPGNVIRATINALTSMATPEKVAAKRGKSVEEILSHVQ.

The S5 DRBM domain occupies 13–76; it reads FLERLVAVNR…DQAKKNLVTI (64 aa).

It belongs to the universal ribosomal protein uS5 family. In terms of assembly, part of the 30S ribosomal subunit. Contacts proteins S4 and S8.

Functionally, with S4 and S12 plays an important role in translational accuracy. In terms of biological role, located at the back of the 30S subunit body where it stabilizes the conformation of the head with respect to the body. The sequence is that of Small ribosomal subunit protein uS5 from Dichelobacter nodosus (strain VCS1703A).